We begin with the raw amino-acid sequence, 560 residues long: Light-independent protochlorophyllide reductase subunit N (560 aa).

[4Fe-4S] cluster contacts are provided by cysteine 24, cysteine 49, and cysteine 109. Residues 173-182 (NSLFNQSSNS) are compositionally biased toward low complexity. The disordered stretch occupies residues 173-210 (NSLFNQSSNSPENLKTLNTKKDTFQNSTENSKTFSAEK). The segment covering 196-206 (FQNSTENSKTF) has biased composition (polar residues).

It belongs to the BchN/ChlN family. Protochlorophyllide reductase is composed of three subunits; ChlL, ChlN and ChlB. Forms a heterotetramer of two ChlB and two ChlN subunits. It depends on [4Fe-4S] cluster as a cofactor.

The protein resides in the plastid. Its subcellular location is the chloroplast. The enzyme catalyses chlorophyllide a + oxidized 2[4Fe-4S]-[ferredoxin] + 2 ADP + 2 phosphate = protochlorophyllide a + reduced 2[4Fe-4S]-[ferredoxin] + 2 ATP + 2 H2O. It functions in the pathway porphyrin-containing compound metabolism; chlorophyll biosynthesis (light-independent). Component of the dark-operative protochlorophyllide reductase (DPOR) that uses Mg-ATP and reduced ferredoxin to reduce ring D of protochlorophyllide (Pchlide) to form chlorophyllide a (Chlide). This reaction is light-independent. The NB-protein (ChlN-ChlB) is the catalytic component of the complex. The polypeptide is Light-independent protochlorophyllide reductase subunit N (Tetradesmus obliquus (Green alga)).